The chain runs to 113 residues: Large ribosomal subunit protein uL22 (113 aa).

This sequence belongs to the universal ribosomal protein uL22 family. As to quaternary structure, part of the 50S ribosomal subunit.

This protein binds specifically to 23S rRNA; its binding is stimulated by other ribosomal proteins, e.g. L4, L17, and L20. It is important during the early stages of 50S assembly. It makes multiple contacts with different domains of the 23S rRNA in the assembled 50S subunit and ribosome. Functionally, the globular domain of the protein is located near the polypeptide exit tunnel on the outside of the subunit, while an extended beta-hairpin is found that lines the wall of the exit tunnel in the center of the 70S ribosome. In Bacillus cytotoxicus (strain DSM 22905 / CIP 110041 / 391-98 / NVH 391-98), this protein is Large ribosomal subunit protein uL22.